The primary structure comprises 184 residues: Peptide deformylase 2 (184 aa).

Residues C110 and H153 each coordinate Fe cation. The active site involves E154. H157 serves as a coordination point for Fe cation.

This sequence belongs to the polypeptide deformylase family. It depends on Fe(2+) as a cofactor.

The enzyme catalyses N-terminal N-formyl-L-methionyl-[peptide] + H2O = N-terminal L-methionyl-[peptide] + formate. Removes the formyl group from the N-terminal Met of newly synthesized proteins. Requires at least a dipeptide for an efficient rate of reaction. N-terminal L-methionine is a prerequisite for activity but the enzyme has broad specificity at other positions. This chain is Peptide deformylase 2, found in Bacillus cereus (strain ATCC 14579 / DSM 31 / CCUG 7414 / JCM 2152 / NBRC 15305 / NCIMB 9373 / NCTC 2599 / NRRL B-3711).